The following is a 186-amino-acid chain: Methyl-CpG-binding domain-containing protein 4 (186 aa).

Residues 22–77 form a CW-type zinc finger; that stretch reads GRLIDTYAAQCDNCHKWRVIDSQEEYEDIRSKMLEDPFNCQKKQGMSCEEPADIDY. The MBD-associated domain (MAD) signature appears at 31–69; it reads QCDNCHKWRVIDSQEEYEDIRSKMLEDPFNCQKKQGMSC. Zn(2+) is bound by residues Cys-32, Cys-35, Cys-61, and Cys-69. Positions 83-153 constitute an MBD domain; that stretch reads WVIDKPGLPK…GDFNFTVPKV (71 aa). Residues 154 to 186 are disordered; that stretch reads MEDTVPPDPKLGSPFPSTTTTTSEKSSVKQSHN. Over residues 166–178 the composition is skewed to low complexity; it reads SPFPSTTTTTSEK.

Expressed in rosette leaves, buds, flowers, stems, mature seeds and roots.

Its subcellular location is the nucleus. Functionally, transcriptional regulator that binds CpG, CpNpN and CpNpG (N is A, T, or C) islands in promoters regardless the DNA methylation status. Plays probably a role in gene silencing. In Arabidopsis thaliana (Mouse-ear cress), this protein is Methyl-CpG-binding domain-containing protein 4 (MBD4).